A 228-amino-acid polypeptide reads, in one-letter code: Aquaporin Z 1 (228 aa).

A run of 2 helical transmembrane segments spans residues 9-29 (FLGT…AAAF) and 34-54 (IGLL…AYAV). Residues 63–65 (NPA) carry the NPA 1 motif. 3 helical membrane-spanning segments follow: residues 82–102 (VGYI…LYVI), 129–149 (LTAA…IILG), and 156–176 (PVGF…LVSI). Positions 184–186 (NPA) match the NPA 2 motif. The helical transmembrane segment at 204-224 (WLFWVAPLIGAVIAGIVWKIV) threads the bilayer.

This sequence belongs to the MIP/aquaporin (TC 1.A.8) family. As to quaternary structure, homotetramer.

It is found in the cell inner membrane. It catalyses the reaction H2O(in) = H2O(out). In terms of biological role, channel that permits osmotically driven movement of water in both directions. It is involved in the osmoregulation and in the maintenance of cell turgor during volume expansion in rapidly growing cells. It mediates rapid entry or exit of water in response to abrupt changes in osmolarity. The sequence is that of Aquaporin Z 1 from Rhizobium meliloti (strain 1021) (Ensifer meliloti).